A 286-amino-acid chain; its full sequence is Prohibitin-2, mitochondrial (286 aa).

Residues 1–13 (MSFNKVPNIPGAP) are Mitochondrial matrix-facing. Residues 14-32 (ALSALLKVSVIGGLGVYAL) form a helical; Signal-anchor for type II membrane protein membrane-spanning segment. The Mitochondrial intermembrane portion of the chain corresponds to 33–286 (TNSLYNVDGG…LQEMNLEPKK (254 aa)). Residues 186–219 (KEFTAAIEAKQVAAQEAERAKFIVEKAEQDRRSA) adopt a coiled-coil conformation.

This sequence belongs to the prohibitin family. As to quaternary structure, component of a prohibitin multimeric complex in mitochondrial membranes. As to expression, mostly expressed in proliferative tissues, including vasculature, shoot and root apical tissues.

It localises to the mitochondrion inner membrane. Prohibitin probably acts as a holdase/unfoldase for the stabilization of newly synthesized mitochondrial proteins. The polypeptide is Prohibitin-2, mitochondrial (PHB2) (Arabidopsis thaliana (Mouse-ear cress)).